The sequence spans 211 residues: ATP-dependent Clp protease proteolytic subunit 1 (211 aa).

Residue Ser107 is the Nucleophile of the active site. His132 is an active-site residue.

The protein belongs to the peptidase S14 family. As to quaternary structure, fourteen ClpP subunits assemble into 2 heptameric rings which stack back to back to give a disk-like structure with a central cavity, resembling the structure of eukaryotic proteasomes.

The protein resides in the cytoplasm. It catalyses the reaction Hydrolysis of proteins to small peptides in the presence of ATP and magnesium. alpha-casein is the usual test substrate. In the absence of ATP, only oligopeptides shorter than five residues are hydrolyzed (such as succinyl-Leu-Tyr-|-NHMec, and Leu-Tyr-Leu-|-Tyr-Trp, in which cleavage of the -Tyr-|-Leu- and -Tyr-|-Trp bonds also occurs).. Functionally, cleaves peptides in various proteins in a process that requires ATP hydrolysis. Has a chymotrypsin-like activity. Plays a major role in the degradation of misfolded proteins. The polypeptide is ATP-dependent Clp protease proteolytic subunit 1 (Mycolicibacterium paratuberculosis (strain ATCC BAA-968 / K-10) (Mycobacterium paratuberculosis)).